The following is a 278-amino-acid chain: Diaminopimelate epimerase (278 aa).

The substrate site is built by N11 and N75. C84 acts as the Proton donor in catalysis. Residues 85–86, N160, N195, and 213–214 each bind substrate; these read GN and ER. C222 (proton acceptor) is an active-site residue. 223-224 provides a ligand contact to substrate; sequence GT.

It belongs to the diaminopimelate epimerase family. Homodimer.

It localises to the cytoplasm. It carries out the reaction (2S,6S)-2,6-diaminopimelate = meso-2,6-diaminopimelate. The protein operates within amino-acid biosynthesis; L-lysine biosynthesis via DAP pathway; DL-2,6-diaminopimelate from LL-2,6-diaminopimelate: step 1/1. Functionally, catalyzes the stereoinversion of LL-2,6-diaminopimelate (L,L-DAP) to meso-diaminopimelate (meso-DAP), a precursor of L-lysine and an essential component of the bacterial peptidoglycan. This Corynebacterium aurimucosum (strain ATCC 700975 / DSM 44827 / CIP 107346 / CN-1) (Corynebacterium nigricans) protein is Diaminopimelate epimerase.